Consider the following 343-residue polypeptide: Anthranilate phosphoribosyltransferase (343 aa).

Residues Gly-84, 87 to 88 (GD), Thr-92, 94 to 97 (NIST), 112 to 120 (KHGNRSASS), and Ser-124 each bind 5-phospho-alpha-D-ribose 1-diphosphate. Gly-84 is a binding site for anthranilate. Ser-96 contacts Mg(2+). Asn-115 lines the anthranilate pocket. Arg-170 contacts anthranilate. Mg(2+) contacts are provided by Asp-229 and Glu-230.

It belongs to the anthranilate phosphoribosyltransferase family. As to quaternary structure, homodimer. Requires Mg(2+) as cofactor.

The enzyme catalyses N-(5-phospho-beta-D-ribosyl)anthranilate + diphosphate = 5-phospho-alpha-D-ribose 1-diphosphate + anthranilate. The protein operates within amino-acid biosynthesis; L-tryptophan biosynthesis; L-tryptophan from chorismate: step 2/5. Its function is as follows. Catalyzes the transfer of the phosphoribosyl group of 5-phosphorylribose-1-pyrophosphate (PRPP) to anthranilate to yield N-(5'-phosphoribosyl)-anthranilate (PRA). The sequence is that of Anthranilate phosphoribosyltransferase from Bordetella pertussis (strain Tohama I / ATCC BAA-589 / NCTC 13251).